The chain runs to 189 residues: Peptidyl-tRNA hydrolase (189 aa).

The Proton acceptor role is filled by histidine 19. The tRNA site is built by tyrosine 64, asparagine 66, and asparagine 112.

This sequence belongs to the PTH family. In terms of assembly, monomer.

Its subcellular location is the cytoplasm. It catalyses the reaction an N-acyl-L-alpha-aminoacyl-tRNA + H2O = an N-acyl-L-amino acid + a tRNA + H(+). Functionally, hydrolyzes ribosome-free peptidyl-tRNAs (with 1 or more amino acids incorporated), which drop off the ribosome during protein synthesis, or as a result of ribosome stalling. In terms of biological role, catalyzes the release of premature peptidyl moieties from peptidyl-tRNA molecules trapped in stalled 50S ribosomal subunits, and thus maintains levels of free tRNAs and 50S ribosomes. This is Peptidyl-tRNA hydrolase from Gluconobacter oxydans (strain 621H) (Gluconobacter suboxydans).